We begin with the raw amino-acid sequence, 256 residues long: uncharacterized protein (256 aa).

Over residues 201 to 214 the composition is skewed to basic and acidic residues; sequence ACKEGVDSSCKEEG. Positions 201–231 are disordered; that stretch reads ACKEGVDSSCKEEGGGCEEEGSGSEEDSDDS. Residues 215–231 show a composition bias toward acidic residues; the sequence is GGCEEEGSGSEEDSDDS.

Its subcellular location is the mitochondrion. This is an uncharacterized protein from Zea mays (Maize).